The primary structure comprises 228 residues: ATP-dependent dethiobiotin synthetase BioD (228 aa).

13 to 18 (DVGKTV) contacts ATP. Thr17 provides a ligand contact to Mg(2+). The active site involves Lys38. Residues Asp55, 116-119 (EGAG), 176-177 (NR), and 205-207 (PYI) contribute to the ATP site. Residues Asp55 and Glu116 each coordinate Mg(2+).

Belongs to the dethiobiotin synthetase family. As to quaternary structure, homodimer. Mg(2+) is required as a cofactor.

The protein resides in the cytoplasm. It catalyses the reaction (7R,8S)-7,8-diammoniononanoate + CO2 + ATP = (4R,5S)-dethiobiotin + ADP + phosphate + 3 H(+). It participates in cofactor biosynthesis; biotin biosynthesis; biotin from 7,8-diaminononanoate: step 1/2. In terms of biological role, catalyzes a mechanistically unusual reaction, the ATP-dependent insertion of CO2 between the N7 and N8 nitrogen atoms of 7,8-diaminopelargonic acid (DAPA, also called 7,8-diammoniononanoate) to form a ureido ring. The chain is ATP-dependent dethiobiotin synthetase BioD from Vibrio parahaemolyticus serotype O3:K6 (strain RIMD 2210633).